Consider the following 143-residue polypeptide: Large ribosomal subunit protein uL11 (143 aa).

It belongs to the universal ribosomal protein uL11 family. Part of the ribosomal stalk of the 50S ribosomal subunit. Interacts with L10 and the large rRNA to form the base of the stalk. L10 forms an elongated spine to which L12 dimers bind in a sequential fashion forming a multimeric L10(L12)X complex. In terms of processing, one or more lysine residues are methylated.

In terms of biological role, forms part of the ribosomal stalk which helps the ribosome interact with GTP-bound translation factors. The polypeptide is Large ribosomal subunit protein uL11 (Salinispora tropica (strain ATCC BAA-916 / DSM 44818 / JCM 13857 / NBRC 105044 / CNB-440)).